Reading from the N-terminus, the 1054-residue chain is MAAAPRGIWEQRRLGCGLGPLARLLILAQALRLLPAARAGLCPAPCACRLPLLDCSRRKLPAPSWRALSGPLPSDISSLDLSHNRLSNWNNTLESQTLQEVKMNYNELTEIPYFGEPTPNITLLSLVHNLIPEINAEAFELYSALESLDLSSNIISEIKTSSFPRMSLKYLNLSNNRISTLEAGCFDNLSDSLLVVKLNRNRISMIPPKVFKLPHLQFLELKRNRIKIVEGLTFQGLDSLRSLKMQRNGISKLKDGAFFGLNNMEELELEHNNLTGVNKGWLYGLRMLQQLYMSQNAIEKISPDAWEFCQRLSELDLSYNQLTRLDESAFVGLSLLERLNLGDNRVTHIADGVFRFLSNLQTLDLRNNDISWAIEDASEAFSGLKSLTKLILQGNRIKSVTQKAFIGLESLEYLDLNNNAIMSIQENAFSQTHLKGLVLNTSSLLCDCHLKWLLQWLVDNNFHHSVNVSCAHPEWLAGQSILNVDLKDFVCDDFLKPQIRTHPESTIALRGVNVTLTCTAVSSSDSPMSTIWRKDSEILYDVDIENFVRYRQQDGEALEYTSVLRLFSVNFTDEGKYQCIVTNHFGSNYSQKAKLTVNEMPSFLKTPMDLTIRTGAMARLECAAEGHPTPQISWQKDGGTDFPAARERRMHVMPEDDVFFIANVKIEDMGIYSCMAQNIAGGLSANASLTVLETPSFIRPLEDKTVTRGETAVLQCIAGGSPAPRLNWTKDDGPLLVTERHFFAAANQLLIIVDAGLEDAGKYTCLMSNTLGTERGHIYLNVISSPNCDSSQSSIGHEDDGWTTVGIVIIVVVCCVVGTSLIWVIVIYHMRRKNEDYSITNTEELNLPADIPSYLSSQGTLSEPQEGYSNSEAGSHQQLMPPANGYTHRGTDGGAGTRVICSDCYDNANIYSRTREYCPYTYIAEEDVLDQALSSLMVQMPKETFLSHPPQDAANLESLIPSAEREPAAFPTNHERMTENLPFSQRSSEIFQRPLWNMNRELGLLPFSQQPVLESPELTERDPNCSSPVTCRRLHDHAFDFSRTRIIQDGTEGT.

The first 39 residues, 1–39 (MAAAPRGIWEQRRLGCGLGPLARLLILAQALRLLPAARA), serve as a signal peptide directing secretion. One can recognise an LRRNT domain in the interval 40-74 (GLCPAPCACRLPLLDCSRRKLPAPSWRALSGPLPS). LRR repeat units lie at residues 75-96 (DISSLDLSHNRLSNWNNTLESQ), 97-118 (TLQEVKMNYNELTEIPYFGEPT), 120-141 (NITLLSLVHNLIPEINAEAFEL), 144-165 (ALESLDLSSNIISEIKTSSFPR), 167-188 (SLKYLNLSNNRISTLEAGCFDN), 192-213 (SLLVVKLNRNRISMIPPKVFKL), 215-236 (HLQFLELKRNRIKIVEGLTFQG), 239-260 (SLRSLKMQRNGISKLKDGAFFG), 263-284 (NMEELELEHNNLTGVNKGWLYG), 287-308 (MLQQLYMSQNAIEKISPDAWEF), 311-332 (RLSELDLSYNQLTRLDESAFVG), 335-356 (LLERLNLGDNRVTHIADGVFRF), 359-381 (NLQTLDLRNNDISWAIEDASEAF), 386-407 (SLTKLILQGNRIKSVTQKAFIG), and 410-431 (SLEYLDLNNNAIMSIQENAFSQ). N90 carries an N-linked (GlcNAc...) asparagine glycan. N120 is a glycosylation site (N-linked (GlcNAc...) asparagine). N172 and N188 each carry an N-linked (GlcNAc...) asparagine glycan. N-linked (GlcNAc...) asparagine glycosylation occurs at N273. N-linked (GlcNAc...) asparagine glycosylation is found at N440, N467, N513, N570, and N588. Residues 442–493 (SSLLCDCHLKWLLQWLVDNNFHHSVNVSCAHPEWLAGQSILNVDLKDFVCDD) enclose the LRRCT domain. 3 consecutive Ig-like C2-type domains span residues 497–596 (PQIR…AKLT), 601–690 (PSFL…ASLT), and 695–784 (PSFI…NVIS). An intrachain disulfide couples C518 to C579. C622 and C674 are joined by a disulfide. N686 and N727 each carry an N-linked (GlcNAc...) asparagine glycan. The cysteines at positions 716 and 765 are disulfide-linked. Residues 807-827 (IVIIVVVCCVVGTSLIWVIVI) form a helical membrane-spanning segment. Y905 bears the Phosphotyrosine mark. An N-linked (GlcNAc...) asparagine glycan is attached at N1024.

The protein resides in the cell membrane. Its subcellular location is the cytoplasm. This Mus musculus (Mouse) protein is Leucine-rich repeats and immunoglobulin-like domains protein 2 (Lrig2).